The following is a 540-amino-acid chain: 2-isopropylmalate synthase (540 aa).

Residues 8–269 (VLIFDTTLRD…YFNPFFGREP (262 aa)) enclose the Pyruvate carboxyltransferase domain. 4 residues coordinate Mn(2+): Asp-17, His-208, His-210, and Asn-244. Residues 408–540 (QLRLVQVSCG…AVLADLRSGI (133 aa)) are regulatory domain.

It belongs to the alpha-IPM synthase/homocitrate synthase family. LeuA type 1 subfamily. Homodimer. It depends on Mn(2+) as a cofactor.

The protein resides in the cytoplasm. It carries out the reaction 3-methyl-2-oxobutanoate + acetyl-CoA + H2O = (2S)-2-isopropylmalate + CoA + H(+). Its pathway is amino-acid biosynthesis; L-leucine biosynthesis; L-leucine from 3-methyl-2-oxobutanoate: step 1/4. In terms of biological role, catalyzes the condensation of the acetyl group of acetyl-CoA with 3-methyl-2-oxobutanoate (2-ketoisovalerate) to form 3-carboxy-3-hydroxy-4-methylpentanoate (2-isopropylmalate). The polypeptide is 2-isopropylmalate synthase (Prochlorococcus marinus (strain MIT 9313)).